Here is a 439-residue protein sequence, read N- to C-terminus: Alpha-1,3-mannosyl-glycoprotein 4-beta-N-acetylglucosaminyltransferase-like protein MGAT4E (439 aa).

Its pathway is protein modification; protein glycosylation. Functionally, glycosyltransferase-like protein that may participate in the transfer of N-acetylglucosamine (GlcNAc) to the core mannose residues of N-linked glycans. The chain is Alpha-1,3-mannosyl-glycoprotein 4-beta-N-acetylglucosaminyltransferase-like protein MGAT4E from Mus musculus (Mouse).